We begin with the raw amino-acid sequence, 907 residues long: Protein translocase subunit SecA (907 aa).

Residues Gln87, 105-109 (GEGKT), and Asp512 contribute to the ATP site. 4 residues coordinate Zn(2+): Cys891, Cys893, Cys902, and His903.

Belongs to the SecA family. Monomer and homodimer. Part of the essential Sec protein translocation apparatus which comprises SecA, SecYEG and auxiliary proteins SecDF-YajC and YidC. The cofactor is Zn(2+).

The protein localises to the cell inner membrane. It localises to the cytoplasm. It carries out the reaction ATP + H2O + cellular proteinSide 1 = ADP + phosphate + cellular proteinSide 2.. In terms of biological role, part of the Sec protein translocase complex. Interacts with the SecYEG preprotein conducting channel. Has a central role in coupling the hydrolysis of ATP to the transfer of proteins into and across the cell membrane, serving both as a receptor for the preprotein-SecB complex and as an ATP-driven molecular motor driving the stepwise translocation of polypeptide chains across the membrane. The sequence is that of Protein translocase subunit SecA from Tolumonas auensis (strain DSM 9187 / NBRC 110442 / TA 4).